The chain runs to 145 residues: NADH dehydrogenase [ubiquinone] 1 alpha subcomplex subunit 12 (145 aa).

An N-acetylmethionine modification is found at methionine 1.

It belongs to the complex I NDUFA12 subunit family. In terms of assembly, complex I is composed of 45 different subunits.

Its subcellular location is the mitochondrion inner membrane. Accessory subunit of the mitochondrial membrane respiratory chain NADH dehydrogenase (Complex I), that is believed not to be involved in catalysis. Complex I functions in the transfer of electrons from NADH to the respiratory chain. The immediate electron acceptor for the enzyme is believed to be ubiquinone. In Bos taurus (Bovine), this protein is NADH dehydrogenase [ubiquinone] 1 alpha subcomplex subunit 12 (NDUFA12).